The primary structure comprises 356 residues: MTTIISGLRFRGKICDENRVTETIEENNQENNKKFIEEFYPDKESDKNFSDDDSDDSDDSDDSENSDEEFDNKFTEKKPIGQYINIIDKMCRNKSDKEFLRKTIKNSIGYFDWTVQDRDKIYDFTQKKFGFKKLVCVKDNMEPIIELLALVLIPDSVDIIKSKNSNYKNQIKTDIMYVHSLFVLQNSNSEILDKDFANNLPQYQIPIDFFSKYYCVEGTGDMKRYYPSALIKKSFVKGITFFLDFNDAQKIKIMDDLDKLSISNLKKREIATAMFILNLESMINDSIINEKRALEKLKALTKGNLIGIVNHLNNMKIGRDVIEMMIIEDTLNHSHSNKIKELENKITELKYQNEIN.

Positions 25-72 (EENNQENNKKFIEEFYPDKESDKNFSDDDSDDSDDSDDSENSDEEFDN) are disordered. The span at 31–50 (NNKKFIEEFYPDKESDKNFS) shows a compositional bias: basic and acidic residues. Positions 51 to 70 (DDDSDDSDDSDDSENSDEEF) are enriched in acidic residues. The stretch at 328–356 (EDTLNHSHSNKIKELENKITELKYQNEIN) forms a coiled coil.

Belongs to the mimivirus L17/R827 family.

This is an uncharacterized protein from Acanthamoeba polyphaga mimivirus (APMV).